The following is a 43-amino-acid chain: Protein PsbN (43 aa).

Residues 5–27 (TLVAISISCLLVSFTGYALYTAF) traverse the membrane as a helical segment.

This sequence belongs to the PsbN family.

Its subcellular location is the plastid. It is found in the chloroplast thylakoid membrane. Functionally, may play a role in photosystem I and II biogenesis. The sequence is that of Protein PsbN from Cryptomeria japonica (Japanese cedar).